The following is a 223-amino-acid chain: UPF0441 protein ETA_04310 (223 aa).

The segment at 166-223 (YGAATPGRTMTVPKSALAPKPATTSTVTRGGFGESVAKQNTMQRNSSSTGSANRSMGG) is disordered. Polar residues predominate over residues 202–223 (AKQNTMQRNSSSTGSANRSMGG).

The protein belongs to the UPF0441 family.

The sequence is that of UPF0441 protein ETA_04310 from Erwinia tasmaniensis (strain DSM 17950 / CFBP 7177 / CIP 109463 / NCPPB 4357 / Et1/99).